The sequence spans 180 residues: Adenine phosphoribosyltransferase (180 aa).

It belongs to the purine/pyrimidine phosphoribosyltransferase family. In terms of assembly, homodimer.

The protein localises to the cytoplasm. The enzyme catalyses AMP + diphosphate = 5-phospho-alpha-D-ribose 1-diphosphate + adenine. It participates in purine metabolism; AMP biosynthesis via salvage pathway; AMP from adenine: step 1/1. Catalyzes a salvage reaction resulting in the formation of AMP, that is energically less costly than de novo synthesis. This Agrobacterium fabrum (strain C58 / ATCC 33970) (Agrobacterium tumefaciens (strain C58)) protein is Adenine phosphoribosyltransferase.